The following is a 968-amino-acid chain: Isoleucine--tRNA ligase (968 aa).

The 'HIGH' region signature appears at 68–78 (PYANGALHMGH). Position 582 (Glu-582) interacts with L-isoleucyl-5'-AMP. The 'KMSKS' region motif lies at 623–627 (KMSKS). An ATP-binding site is contributed by Lys-626. Zn(2+) contacts are provided by Cys-936, Cys-939, Cys-956, and Cys-959.

The protein belongs to the class-I aminoacyl-tRNA synthetase family. IleS type 1 subfamily. As to quaternary structure, monomer. Requires Zn(2+) as cofactor.

It is found in the cytoplasm. The catalysed reaction is tRNA(Ile) + L-isoleucine + ATP = L-isoleucyl-tRNA(Ile) + AMP + diphosphate. Functionally, catalyzes the attachment of isoleucine to tRNA(Ile). As IleRS can inadvertently accommodate and process structurally similar amino acids such as valine, to avoid such errors it has two additional distinct tRNA(Ile)-dependent editing activities. One activity is designated as 'pretransfer' editing and involves the hydrolysis of activated Val-AMP. The other activity is designated 'posttransfer' editing and involves deacylation of mischarged Val-tRNA(Ile). This is Isoleucine--tRNA ligase from Prochlorococcus marinus (strain MIT 9301).